The sequence spans 1669 residues: Collagen alpha-1(IV) chain (1669 aa).

The N-terminal stretch at 1–27 (MGPRLSVWLLLLFAALLLHEERSRAAA) is a signal peptide. Residues 28–172 (KGDCGGSGCG…LGHVPGTLLK (145 aa)) constitute a propeptide, N-terminal propeptide (7S domain). The segment at 47–1443 (QKGERGLPGL…MGPPGTPSVD (1397 aa)) is disordered. Residues 92 to 104 (TRGPPGAAGYPGN) show a composition bias toward low complexity. Residue Asn126 is glycosylated (N-linked (GlcNAc...) asparagine). Residues 173–1440 (GERGFPGIPG…PGSMGPPGTP (1268 aa)) form a triple-helical region region. Over residues 196 to 214 (VGPPGFTGPPGPPGPPGPP) the composition is skewed to pro residues. 3-hydroxyproline is present on residues Pro204, Pro207, and Pro210. Positions 234-247 (QGVSGPPGVPGQAQ) are enriched in low complexity. Residues 289–298 (PGKDGEKGER) show a composition bias toward basic and acidic residues. A compositionally biased stretch (pro residues) spans 367 to 376 (PGQPGPPGFP). Positions 377-387 (TPGQAGAPGFP) are enriched in low complexity. 2 stretches are compositionally biased toward pro residues: residues 413-424 (PGPPGPPGPPGQ) and 436-448 (PGPP…PGTP). Low complexity predominate over residues 485–494 (PGEIGFPGQP). Basic and acidic residues-rich tracts occupy residues 497–508 (KGDRGLPGRDGL) and 535–545 (FDMRLKGDKGD). Positions 586-595 (GPPGGVGFPG) are enriched in gly residues. Pro587 and Pro602 each carry 3-hydroxyproline. Residue Pro603 is modified to 4-hydroxyproline. A 3-hydroxyproline modification is found at Pro605. A 4-hydroxyproline modification is found at Pro606. Over residues 611-620 (IGPVGEKGQA) the composition is skewed to low complexity. Gly residues predominate over residues 621-630 (GFPGGPGSPG). A 4-hydroxyproline mark is found at Pro623, Pro626, Pro629, and Pro632. Pro647 is modified (3-hydroxyproline). Residues 715–731 (RPGFNGLPGNPGPQGQK) show a composition bias toward low complexity. The segment covering 758-767 (GSIGGPGVPG) has biased composition (gly residues). The segment covering 784–802 (PGPPGVQGPAGPPGVPGIG) has biased composition (pro residues). Gly residues predominate over residues 803-817 (PPGAMGPPGGQGPPG). Low complexity-rich tracts occupy residues 847 to 875 (SQGL…PGFP) and 994 to 1003 (DPGLSGTPGS). Over residues 1011–1020 (GSVGGMGLPG) the composition is skewed to gly residues. Pro1214 carries the 3-hydroxyproline modification. Low complexity predominate over residues 1220 to 1230 (QPGLPGTPGHP). Residues 1247–1258 (PGHPGPMGPPGF) show a composition bias toward pro residues. The segment covering 1290–1299 (GMPGIGGSPG) has biased composition (gly residues). Low complexity-rich tracts occupy residues 1333–1343 (DQGVPGPKGLQ), 1368–1391 (PGLK…SVGL), and 1398–1412 (PGFD…ETGP). Positions 1413–1428 (FGPPGPRGFPGPPGPD) are enriched in pro residues. The residue at position 1424 (Pro1424) is a 3-hydroxyproline. The Collagen IV NC1 domain maps to 1445 to 1669 (GFLVTRHSQT…SRCQVCMRRT (225 aa)). 6 cysteine pairs are disulfide-bonded: Cys1460–Cys1551, Cys1493–Cys1548, Cys1505–Cys1511, Cys1570–Cys1665, Cys1604–Cys1662, and Cys1616–Cys1622. Residue Met1533 forms an S-Lysyl-methionine sulfilimine (Met-Lys) (interchain with K-1651) linkage. Residue Lys1651 forms an S-Lysyl-methionine sulfilimine (Lys-Met) (interchain with M-1533) linkage.

This sequence belongs to the type IV collagen family. As to quaternary structure, there are six type IV collagen isoforms, alpha 1(IV)-alpha 6(IV), each of which can form a triple helix structure with 2 other chains to generate type IV collagen network. Interacts with EFEMP2. In terms of processing, lysines at the third position of the tripeptide repeating unit (G-X-Y) are hydroxylated. The modified lysines can be O-glycosylated. Contains 4-hydroxyproline. Prolines at the third position of the tripeptide repeating unit (G-X-Y) are hydroxylated in some or all of the chains. Post-translationally, contains 3-hydroxyproline. This modification occurs on the first proline residue in the sequence motif Gly-Pro-Hyp, where Hyp is 4-hydroxyproline. In terms of processing, type IV collagens contain numerous cysteine residues which are involved in inter- and intramolecular disulfide bonding. 12 of these, located in the NC1 domain, are conserved in all known type IV collagens. The trimeric structure of the NC1 domains is stabilized by covalent bonds (sulfilimine cross-links) between Lys and Met residues. These cross-links are important for the mechanical stability of the basement membrane. Sulfilimine cross-link is catalyzed by PXDN. Post-translationally, proteolytic processing produces the C-terminal NC1 peptide, arresten. As to expression, detected in the basement membrane of the cornea (at protein level).

Its subcellular location is the secreted. It is found in the extracellular space. The protein resides in the extracellular matrix. The protein localises to the basement membrane. Its function is as follows. Type IV collagen is the major structural component of glomerular basement membranes (GBM), forming a 'chicken-wire' meshwork together with laminins, proteoglycans and entactin/nidogen. In terms of biological role, arresten, comprising the C-terminal NC1 domain, inhibits angiogenesis and tumor formation. The C-terminal half is found to possess the anti-angiogenic activity. Specifically inhibits endothelial cell proliferation, migration and tube formation. The polypeptide is Collagen alpha-1(IV) chain (Mus musculus (Mouse)).